The chain runs to 302 residues: MPNIDFVGKRSFFIYLSIALILFSVIVIFVKGFNLGVDFSGGSEIIVSFDKSYTIDELRNGLQTINQEYATAKIIQTNPGGGASDQFFYIITVRDSFPTLEEKQMFINSLEESFSDSSLNIEQFNDVSGYAAREIRSYAWYAVIISLIVLLAYITIRFQFSYGVGAILALAHDVIITLGFYSLFGIEMNLTAIAAFLTLAGYSLNDTIVVYDRIRENRSKNRGMDIESITNKSINEVIVRSLNTSLTTFLVVFMMFLLGGRSIASFAFGLTVGVIIGTYSSLYIASPIVIGMVKRRKKTQKA.

A run of 6 helical transmembrane segments spans residues Phe12–Gly32, Tyr138–Phe158, Ala166–Ile186, Leu190–Val210, Phe249–Gly269, and Val272–Met292.

This sequence belongs to the SecD/SecF family. SecF subfamily. As to quaternary structure, forms a complex with SecD. Part of the essential Sec protein translocation apparatus which comprises SecA, SecYEG and auxiliary proteins SecDF. Other proteins may also be involved.

It localises to the cell inner membrane. Its function is as follows. Part of the Sec protein translocase complex. Interacts with the SecYEG preprotein conducting channel. SecDF uses the proton motive force (PMF) to complete protein translocation after the ATP-dependent function of SecA. In Petrotoga mobilis (strain DSM 10674 / SJ95), this protein is Protein translocase subunit SecF.